A 374-amino-acid chain; its full sequence is Amino acid binding protein (374 aa).

The first 27 residues, 1-27 (MSKKLFRKGILALAVSSVMGLSTHALA), serve as a signal peptide directing secretion.

This sequence belongs to the leucine-binding protein family.

The protein resides in the periplasm. Functionally, binds primarily proteinogenic amino acids. In Pseudomonas aeruginosa (strain ATCC 15692 / DSM 22644 / CIP 104116 / JCM 14847 / LMG 12228 / 1C / PRS 101 / PAO1), this protein is Amino acid binding protein.